The following is a 184-amino-acid chain: Muscle-specific protein 20 (184 aa).

The Calponin-homology (CH) domain maps to 17 to 122 (PEMDKEAQEW…NTIFALGRAT (106 aa)). Residues 157 to 181 (VGLQAGSNKGATQAGQNLGAGRKIL) form a Calponin-like repeat.

Belongs to the calponin family. As to expression, found in synchronous muscle; not found in asynchronous indirect flight muscle.

The chain is Muscle-specific protein 20 (Mp20) from Drosophila melanogaster (Fruit fly).